Reading from the N-terminus, the 482-residue chain is Serine decarboxylase 1 (482 aa).

The disordered stretch occupies residues 36-55; sequence EVESPPRPAEEEGEGSPTRR. Residue histidine 200 participates in substrate binding. Residue lysine 312 is modified to N6-(pyridoxal phosphate)lysine.

The protein belongs to the group II decarboxylase family. Requires pyridoxal 5'-phosphate as cofactor.

The enzyme catalyses L-serine + H(+) = ethanolamine + CO2. Catalyzes the biosynthesis of ethanolamine from serine. Decarboxylation of free serine is the major source of ethanolamine production in plants and ethanolamine metabolism is crucial for the synthesis of choline, phosphatidylethanolamine (PE) and phosphatidylcholine (PC), and thus for plant growth. The polypeptide is Serine decarboxylase 1 (SDC1) (Oryza sativa subsp. japonica (Rice)).